Reading from the N-terminus, the 323-residue chain is Serpentine receptor class gamma-5 (323 aa).

The next 7 helical transmembrane spans lie at Q31–F51, F63–I83, Y98–Y117, I151–I171, W193–F213, A245–A265, and F272–I292.

Belongs to the nematode receptor-like protein srg family.

The protein localises to the membrane. This is Serpentine receptor class gamma-5 (srg-5) from Caenorhabditis elegans.